We begin with the raw amino-acid sequence, 447 residues long: FAD-dependent monooxygenase tropB (447 aa).

A helical membrane pass occupies residues 12-32 (PLSVGIVGGGIIGVILAAGLV). The FAD site is built by glutamate 42, alanine 55, and arginine 124. Residue asparagine 153 is glycosylated (N-linked (GlcNAc...) asparagine). Catalysis depends on residues arginine 206 and tyrosine 239. Asparagine 243 carries N-linked (GlcNAc...) asparagine glycosylation. FAD contacts are provided by aspartate 322 and alanine 335.

It belongs to the paxM FAD-dependent monooxygenase family. FAD serves as cofactor.

It is found in the membrane. The protein operates within secondary metabolite biosynthesis. In terms of biological role, FAD-dependent monooxygenase; part of the gene cluster that mediates the biosynthesis of the tropolone class of fungal maleic anhydrides. Within the pathway, tropB catalyzes a synthetically challenging asymmetric oxidative dearomatization reaction to convert 3-methylorcinaldehyde into a hydroxycyclohexadione. The pathway begins with the synthesis of 3-methylorcinaldehyde by the non-reducing polyketide synthase (PKS) tropA. 3-methylorcinaldehyde is the substrate for the FAD-dependent monooxygenase tropB to yield a dearomatized hydroxycyclohexadione. The 2-oxoglutarate-dependent dioxygenase tropC then performs the oxidative ring expansion to provide the first tropolone metabolite stipitaldehyde. Trop D converts stipitaldehyde into stipitacetal which is in turn converted to stipitalide by the short-chain dehydrogenase/reductase tropE. The next steps involve tropF, tropG, tropH, tropI and tropJ to form successive tropolone maleic anhydrides including stipitaldehydic, stipitatonic and stipitatic acids. This is FAD-dependent monooxygenase tropB from Talaromyces stipitatus (strain ATCC 10500 / CBS 375.48 / QM 6759 / NRRL 1006) (Penicillium stipitatum).